We begin with the raw amino-acid sequence, 121 residues long: Dihydroneopterin aldolase (121 aa).

Residues Glu25 and Met114 each contribute to the substrate site.

The protein belongs to the archaeal dihydroneopterin aldolase family. As to quaternary structure, homotetramer.

It carries out the reaction 7,8-dihydroneopterin = 6-hydroxymethyl-7,8-dihydropterin + glycolaldehyde. Its pathway is cofactor biosynthesis; 5,6,7,8-tetrahydromethanopterin biosynthesis. Catalyzes the conversion of 7,8-dihydroneopterin (H2Neo) to 6-hydroxymethyl-7,8-dihydropterin (6-HMD). The sequence is that of Dihydroneopterin aldolase from Methanocaldococcus jannaschii (strain ATCC 43067 / DSM 2661 / JAL-1 / JCM 10045 / NBRC 100440) (Methanococcus jannaschii).